Reading from the N-terminus, the 491-residue chain is Glutamine synthetase (491 aa).

The 89-residue stretch at 23–111 folds into the GS beta-grasp domain; that stretch reads NNVRQVLCAF…MFGNVYEAWG (89 aa). Positions 119–491 constitute a GS catalytic domain; that stretch reads PRGYVAKRYE…PWEFMKYFDI (373 aa). Mg(2+) is bound by residues E143 and E145. E225 provides a ligand contact to ATP. Positions 230 and 238 each coordinate Mg(2+). L-glutamate-binding positions include 282–283 and A283; that span reads NA. Residue H287 participates in Mg(2+) binding. ATP is bound by residues 289-291 and S291; that span reads HQS. The L-glutamate site is built by R344, E350, and R362. 2 residues coordinate ATP: R362 and R367. E381 is a Mg(2+) binding site. R383 is a binding site for L-glutamate.

It belongs to the glutamine synthetase family. In terms of assembly, oligomer of 12 subunits arranged in the form of two hexagons. The cofactor is Mg(2+).

It is found in the cytoplasm. It carries out the reaction L-glutamate + NH4(+) + ATP = L-glutamine + ADP + phosphate + H(+). Its function is as follows. Probably involved in nitrogen metabolism via ammonium assimilation. Catalyzes the ATP-dependent biosynthesis of glutamine from glutamate and ammonia. Beta-glutamate is a much poorer substrate than alpha-glutamate. The polypeptide is Glutamine synthetase (Archaeoglobus fulgidus (strain ATCC 49558 / DSM 4304 / JCM 9628 / NBRC 100126 / VC-16)).